We begin with the raw amino-acid sequence, 129 residues long: Small ribosomal subunit protein uS12 (129 aa).

The tract at residues 110–129 (RKQGRSRYGAHRKQVAATKK) is disordered.

This sequence belongs to the universal ribosomal protein uS12 family. As to quaternary structure, part of the 30S ribosomal subunit. Contacts proteins S8 and S17. May interact with IF1 in the 30S initiation complex.

In terms of biological role, with S4 and S5 plays an important role in translational accuracy. Functionally, interacts with and stabilizes bases of the 16S rRNA that are involved in tRNA selection in the A site and with the mRNA backbone. Located at the interface of the 30S and 50S subunits, it traverses the body of the 30S subunit contacting proteins on the other side and probably holding the rRNA structure together. The combined cluster of proteins S8, S12 and S17 appears to hold together the shoulder and platform of the 30S subunit. In Rickettsia prowazekii (strain Madrid E), this protein is Small ribosomal subunit protein uS12.